Here is a 278-residue protein sequence, read N- to C-terminus: Elongation factor Ts 2, mitochondrial (278 aa).

Belongs to the EF-Ts family.

The protein localises to the mitochondrion. Associates with the EF-Tu.GDP complex and induces the exchange of GDP to GTP. It remains bound to the aminoacyl-tRNA.EF-Tu.GTP complex up to the GTP hydrolysis stage on the ribosome. The polypeptide is Elongation factor Ts 2, mitochondrial (Trypanosoma cruzi (strain CL Brener)).